A 357-amino-acid chain; its full sequence is Quinolinate synthase (357 aa).

The iminosuccinate site is built by histidine 50 and serine 71. Cysteine 116 provides a ligand contact to [4Fe-4S] cluster. Residues 142-144 (YAN) and serine 159 each bind iminosuccinate. Cysteine 203 serves as a coordination point for [4Fe-4S] cluster. Iminosuccinate is bound by residues 229–231 (HPE) and threonine 246. Cysteine 300 serves as a coordination point for [4Fe-4S] cluster.

The protein belongs to the quinolinate synthase family. Type 1 subfamily. [4Fe-4S] cluster serves as cofactor.

Its subcellular location is the cytoplasm. It carries out the reaction iminosuccinate + dihydroxyacetone phosphate = quinolinate + phosphate + 2 H2O + H(+). It functions in the pathway cofactor biosynthesis; NAD(+) biosynthesis; quinolinate from iminoaspartate: step 1/1. Functionally, catalyzes the condensation of iminoaspartate with dihydroxyacetone phosphate to form quinolinate. This Shewanella sp. (strain MR-4) protein is Quinolinate synthase.